A 660-amino-acid polypeptide reads, in one-letter code: Histone deacetylase 5 (660 aa).

Ala-2 is modified (N-acetylalanine). Positions 26–349 (KVGLIYDETM…SLACVQVLLE (324 aa)) are histone deacetylase. His-158 functions as the Proton donor/acceptor in the catalytic mechanism. The Zn(2+) site is built by Asp-198, His-200, and Asp-291.

Belongs to the histone deacetylase family. HD type 2 subfamily. As to quaternary structure, interacts with HDA6. Zn(2+) serves as cofactor. Expressed in stems, leaves, flowers, siliques and mature seeds.

The protein resides in the nucleus. It is found in the cytoplasm. It carries out the reaction N(6)-acetyl-L-lysyl-[histone] + H2O = L-lysyl-[histone] + acetate. Inhibited by trichostatin A (TSA), a well-known histone deacetylase inhibitor. In terms of biological role, responsible for the deacetylation of lysine residues on the N-terminal part of the core histones (H2A, H2B, H3 and H4). Histone deacetylation gives a tag for epigenetic repression and plays an important role in transcriptional regulation, cell cycle progression and developmental events. Histone deacetylases act via the formation of large multiprotein complexes. Involved in the regulation of flowering time by repressing FLC and AGL27/MAF1 expression. Forms a histone deacetylase complex with HDA6, FLD and MSI4/FVE that represses FLC gene expression to control flowering time. Unlike its tandem duplication HDA18, HDA5 does not seem to be required for the cellular patterning in the root epidermis. This is Histone deacetylase 5 from Arabidopsis thaliana (Mouse-ear cress).